We begin with the raw amino-acid sequence, 92 residues long: Small ribosomal subunit protein uS19 (92 aa).

This sequence belongs to the universal ribosomal protein uS19 family.

Protein S19 forms a complex with S13 that binds strongly to the 16S ribosomal RNA. The sequence is that of Small ribosomal subunit protein uS19 from Rickettsia canadensis (strain McKiel).